We begin with the raw amino-acid sequence, 119 residues long: Probable prefoldin subunit 6 (119 aa).

Belongs to the prefoldin subunit beta family. Heterohexamer of two PFD-alpha type and four PFD-beta type subunits. May interact with MSP1.

In terms of biological role, binds specifically to cytosolic chaperonin (c-CPN) and transfers target proteins to it. Binds to nascent polypeptide chain and promotes folding in an environment in which there are many competing pathways for nonnative proteins. This Plasmodium falciparum (isolate 3D7) protein is Probable prefoldin subunit 6.